A 697-amino-acid chain; its full sequence is uncharacterized protein (697 aa).

Residues 516-545 adopt a coiled-coil conformation; it reads ADQSQNDVVALSSRIDRLTQEVVALQNSEK.

This is an uncharacterized protein from Callospermophilus lateralis (Golden-mantled ground squirrel).